The chain runs to 403 residues: S-adenosylmethionine synthase (403 aa).

His-15 serves as a coordination point for ATP. Asp-17 contributes to the Mg(2+) binding site. A K(+)-binding site is contributed by Glu-43. L-methionine is bound by residues Glu-56 and Gln-99. The tract at residues 99 to 109 (QSPDINQGVDR) is flexible loop. ATP contacts are provided by residues 166–168 (DAK), 232–233 (KF), Asp-241, 247–248 (RK), Ala-264, and Lys-268. Asp-241 is an L-methionine binding site. Lys-272 is a binding site for L-methionine.

The protein belongs to the AdoMet synthase family. In terms of assembly, homotetramer; dimer of dimers. It depends on Mg(2+) as a cofactor. K(+) is required as a cofactor.

The protein localises to the cytoplasm. The catalysed reaction is L-methionine + ATP + H2O = S-adenosyl-L-methionine + phosphate + diphosphate. It participates in amino-acid biosynthesis; S-adenosyl-L-methionine biosynthesis; S-adenosyl-L-methionine from L-methionine: step 1/1. Catalyzes the formation of S-adenosylmethionine (AdoMet) from methionine and ATP. The overall synthetic reaction is composed of two sequential steps, AdoMet formation and the subsequent tripolyphosphate hydrolysis which occurs prior to release of AdoMet from the enzyme. The sequence is that of S-adenosylmethionine synthase from Xanthomonas campestris pv. campestris (strain ATCC 33913 / DSM 3586 / NCPPB 528 / LMG 568 / P 25).